A 36-amino-acid polypeptide reads, in one-letter code: Defensin-like turtle egg white protein TEWP (36 aa).

Gln-1 carries the pyrrolidone carboxylic acid modification. Disulfide bonds link Cys-4-Cys-30, Cys-8-Cys-29, and Cys-12-Cys-24.

It belongs to the beta-defensin family. Monomer. In terms of tissue distribution, detected in egg white (at protein level).

It localises to the secreted. Antibacterial and antiviral peptide. Has strong inhibitory activity towards E.coli and S.typhimurium. Has significant antiviral activity against Chandipura virus. In Caretta caretta (Loggerhead sea turtle), this protein is Defensin-like turtle egg white protein TEWP.